We begin with the raw amino-acid sequence, 327 residues long: D-threonate 4-phosphate dehydrogenase (327 aa).

Substrate contacts are provided by His-139 and Thr-140. A divalent metal cation-binding residues include His-169, His-213, and His-268. Substrate is bound by residues Lys-276, Asn-285, and Arg-294.

Belongs to the PdxA family. PdxA2 subfamily. In terms of assembly, homodimer. A divalent metal cation is required as a cofactor.

The catalysed reaction is 4-O-phospho-D-threonate + NAD(+) = dihydroxyacetone phosphate + CO2 + NADH. Catalyzes the NAD-dependent oxidation and subsequent decarboxylation of D-threonate 4-phosphate to produce dihydroxyacetone phosphate (DHAP). Can also use 4-hydroxy-L-threonine 4-phosphate as substrate. The chain is D-threonate 4-phosphate dehydrogenase from Salmonella typhimurium (strain LT2 / SGSC1412 / ATCC 700720).